Reading from the N-terminus, the 503-residue chain is 12-dehydrotetracycline 5-monooxygenase/anhydrotetracycline 6-monooxygenase (503 aa).

Residues Thr13, 32 to 33 (ER), Leu44, Gln99, Val123, Thr160, Asp288, and 301 to 302 (LN) contribute to the FAD site.

This sequence belongs to the PheA/TfdB FAD monooxygenase family. As to quaternary structure, monomer. The cofactor is FAD.

It carries out the reaction 5a,11a-dehydrotetracycline + NADPH + O2 + H(+) = 5a,11a-dehydrooxytetracycline + NADP(+) + H2O. It catalyses the reaction anhydrotetracycline + NADPH + O2 + H(+) = 5a,11a-dehydrotetracycline + NADP(+) + H2O. It functions in the pathway antibiotic biosynthesis; oxytetracycline biosynthesis. Functionally, involved in the biosynthesis of the antibiotics oxytetracycline and tetracycline. OxyS starts by catalyzing the stereospecific hydroxylation of anhydrotetracycline at C(6) position to yield 5a,11a-dehydrotetracycline (12-dehydrotetracycline). If the released product is captured by OxyR, it is reduced to tetracycline. However, if the released product is recaptured by OxyS, it performs an additional hydroxylation at C(5), producing 5a,11a-dehydrooxytetracycline, which, following the action of OxyR becomes oxytetracycline. The protein is 12-dehydrotetracycline 5-monooxygenase/anhydrotetracycline 6-monooxygenase of Streptomyces rimosus subsp. rimosus (strain ATCC 10970 / DSM 40260 / JCM 4667 / NRRL 2234).